A 516-amino-acid chain; its full sequence is Glucose-6-phosphate 1-dehydrogenase 5, cytoplasmic (516 aa).

Residues 38–45 (GASGDLAK), Arg73, Tyr156, and Lys183 contribute to the NADP(+) site. D-glucose 6-phosphate is bound by residues Lys183, 213–217 (HYLGK), Glu251, and Asp270. His275 acts as the Proton acceptor in catalysis. NADP(+) is bound at residue Lys358. Residues Lys361 and Lys366 each contribute to the D-glucose 6-phosphate site. NADP(+)-binding residues include Lys367, Arg371, and Arg395. Residue Gln397 participates in D-glucose 6-phosphate binding. NADP(+) contacts are provided by residues 403-405 (YMK), 423-425 (DLS), Arg489, and Trp511.

The protein belongs to the glucose-6-phosphate dehydrogenase family. In terms of assembly, forms homodimer. Expressed in leaves and stems.

It localises to the cytoplasm. Its subcellular location is the cytosol. It catalyses the reaction D-glucose 6-phosphate + NADP(+) = 6-phospho-D-glucono-1,5-lactone + NADPH + H(+). It participates in carbohydrate degradation; pentose phosphate pathway; D-ribulose 5-phosphate from D-glucose 6-phosphate (oxidative stage): step 1/3. Regulated by metabolites. Catalyzes the rate-limiting step of the oxidative pentose-phosphate pathway, which represents a route for the dissimilation of carbohydrates besides glycolysis. The main function of this enzyme is to provide reducing power (NADPH) and pentose phosphates for fatty acid and nucleic acid synthesis which are involved in membrane synthesis and cell division. The polypeptide is Glucose-6-phosphate 1-dehydrogenase 5, cytoplasmic (Arabidopsis thaliana (Mouse-ear cress)).